The sequence spans 801 residues: Phenylalanine--tRNA ligase beta subunit (801 aa).

One can recognise a tRNA-binding domain in the interval 39–147 (GGGLDEVVVA…TDLPLGVPVF (109 aa)). Residues 401 to 477 (LPRRTVRFRV…RLNGYNNIPV (77 aa)) form the B5 domain. Asp-455, Asp-461, Glu-464, and Glu-465 together coordinate Mg(2+). The FDX-ACB domain maps to 708–801 (SRFPDTFRDI…LVKKLAVTIR (94 aa)).

Belongs to the phenylalanyl-tRNA synthetase beta subunit family. Type 1 subfamily. Tetramer of two alpha and two beta subunits. Requires Mg(2+) as cofactor.

Its subcellular location is the cytoplasm. The enzyme catalyses tRNA(Phe) + L-phenylalanine + ATP = L-phenylalanyl-tRNA(Phe) + AMP + diphosphate + H(+). The sequence is that of Phenylalanine--tRNA ligase beta subunit from Geobacter metallireducens (strain ATCC 53774 / DSM 7210 / GS-15).